Consider the following 840-residue polypeptide: Protein translocase subunit SecA (840 aa).

ATP-binding positions include Gln85, 103-107 (GEGKT), and Asp492. Residues 787–821 (QRERVAKETGASHGGDSQEIKKKPVKKEPKVGRND) are disordered. The span at 802 to 819 (DSQEIKKKPVKKEPKVGR) shows a compositional bias: basic and acidic residues. Zn(2+) contacts are provided by Cys823, Cys825, Cys834, and Cys835.

Belongs to the SecA family. As to quaternary structure, monomer and homodimer. Part of the essential Sec protein translocation apparatus which comprises SecA, SecYEG and auxiliary proteins SecDF. Other proteins may also be involved. The cofactor is Zn(2+).

It localises to the cell membrane. Its subcellular location is the cytoplasm. It carries out the reaction ATP + H2O + cellular proteinSide 1 = ADP + phosphate + cellular proteinSide 2.. Part of the Sec protein translocase complex. Interacts with the SecYEG preprotein conducting channel. Has a central role in coupling the hydrolysis of ATP to the transfer of proteins into and across the cell membrane, serving as an ATP-driven molecular motor driving the stepwise translocation of polypeptide chains across the membrane. In Clostridium perfringens (strain SM101 / Type A), this protein is Protein translocase subunit SecA.